A 376-amino-acid polypeptide reads, in one-letter code: Mitochondrial distribution and morphology protein 34 (376 aa).

The 194-residue stretch at M1 to Q194 folds into the SMP-LTD domain. Disordered stretches follow at residues S207–V249 and S286–S376. Residues E218 to E230 show a composition bias toward acidic residues. The segment covering V306 to G318 has biased composition (basic residues). The segment covering M350 to R362 has biased composition (basic and acidic residues).

Belongs to the MDM34 family. Component of the ER-mitochondria encounter structure (ERMES) or MDM complex, composed of MMM1, MDM10, MDM12 and MDM34.

It localises to the mitochondrion outer membrane. Functionally, component of the ERMES/MDM complex, which serves as a molecular tether to connect the endoplasmic reticulum (ER) and mitochondria. Components of this complex are involved in the control of mitochondrial shape and protein biogenesis, and function in nonvesicular lipid trafficking between the ER and mitochondria. MDM34 is required for the interaction of the ER-resident membrane protein MMM1 and the outer mitochondrial membrane-resident beta-barrel protein MDM10. The sequence is that of Mitochondrial distribution and morphology protein 34 from Laccaria bicolor (strain S238N-H82 / ATCC MYA-4686) (Bicoloured deceiver).